Consider the following 642-residue polypeptide: A-kinase anchor protein 8-like (642 aa).

Residues 1–269 (MSYTGFVQGS…MRRTWKTWTT (269 aa)) form a sufficient for activation of CTE-mediated expression region. Asymmetric dimethylarginine; alternate is present on arginine 209. An Omega-N-methylarginine; alternate modification is found at arginine 209. Omega-N-methylarginine occurs at positions 218, 238, and 248. An N6-acetyllysine modification is found at lysine 258. The interval 265–382 (KTWTTADFRT…QDKQKKRQRD (118 aa)) is disordered. Threonine 268 carries the phosphothreonine modification. Residues 275–280 (KKKKRK) carry the Nuclear localization signal motif. Positions 281-297 (QGGSPDEPDSKATRTDC) match the Nuclear export signal (NES) motif. Serine 284 bears the Phosphoserine mark. Residues 288–297 (PDSKATRTDC) are compositionally biased toward basic and acidic residues. Threonine 293 is modified (phosphothreonine). At serine 298 the chain carries Phosphoserine. Acidic residues predominate over residues 299–315 (DNSDSDNDEGTEGEAAE). Basic and acidic residues predominate over residues 338–350 (EDGREEGKEDPEK). Positions 363–365 (KRK) match the Nuclear localization signal motif. 2 consecutive C2H2 AKAP95-type zinc fingers follow at residues 392-414 (CSLCKYRTFYEDEMGSHLDSKFH) and 485-508 (CAACDLFIPMQFGIIQKHLKTMDH). The disordered stretch occupies residues 546–642 (GENPFTDNPE…EDDEEGGGGP (97 aa)). The span at 553 to 564 (NPEEEKEQDEVE) shows a compositional bias: acidic residues. Positions 585–605 (AQPPVPLEPAPGTTTPPPPPP) are enriched in pro residues. Positions 631 to 642 (DMEDDEEGGGGP) are enriched in acidic residues.

This sequence belongs to the AKAP95 family. Interacts (via N-terminus) with DHX9 (via RGG region). Interacts with TMPO isoform Beta, PRPF40A, RNF43, lamin-B. Interacts with HDAC3; increased during mitosis. Phosphorylated on serine or threonine residues possibly by PKA.

It localises to the nucleus. Its subcellular location is the nucleus matrix. The protein resides in the nucleus speckle. It is found in the PML body. The protein localises to the cytoplasm. Functionally, could play a role in constitutive transport element (CTE)-mediated gene expression by association with DHX9. Increases CTE-dependent nuclear unspliced mRNA export. Proposed to target PRKACA to the nucleus but does not seem to be implicated in the binding of regulatory subunit II of PKA. May be involved in nuclear envelope breakdown and chromatin condensation. May be involved in anchoring nuclear membranes to chromatin in interphase and in releasing membranes from chromating at mitosis. May regulate the initiation phase of DNA replication when associated with TMPO isoform Beta. Required for cell cycle G2/M transition and histone deacetylation during mitosis. In mitotic cells recruits HDAC3 to the vicinity of chromatin leading to deacetylation and subsequent phosphorylation at 'Ser-10' of histone H3; in this function seems to act redundantly with AKAP8. May be involved in regulation of pre-mRNA splicing. In Mus musculus (Mouse), this protein is A-kinase anchor protein 8-like (Akap8l).